A 290-amino-acid polypeptide reads, in one-letter code: 33 kDa chaperonin (290 aa).

Cystine bridges form between C235–C237 and C268–C271.

It belongs to the HSP33 family. In terms of processing, under oxidizing conditions two disulfide bonds are formed involving the reactive cysteines. Under reducing conditions zinc is bound to the reactive cysteines and the protein is inactive.

Its subcellular location is the cytoplasm. Its function is as follows. Redox regulated molecular chaperone. Protects both thermally unfolding and oxidatively damaged proteins from irreversible aggregation. Plays an important role in the bacterial defense system toward oxidative stress. The polypeptide is 33 kDa chaperonin (Streptococcus pneumoniae (strain CGSP14)).